The following is a 54-amino-acid chain: Apelin receptor early endogenous ligand (54 aa).

Residues 1–22 form the signal peptide; it reads MRFQQFLFAFFIFIMSLLLISG. Residue N27 is glycosylated (N-linked (GlcNAc...) asparagine).

It belongs to the Elabela/Toddler family. Interacts with APLNR. In terms of tissue distribution, expressed in the intima of blood vessels. Expressed in endothelial cells in blood vessels in the heart and lung. Expressed in cytotrophoblasts and syncytiotrophoblasts of first-trimester placental tissue and term placentas (at protein level). Not detected in smooth muscle cells or cardiomyocytes (at protein level). Expressed in kidney. Expressed in blood vessels. Expressed in embryonic (ESCs) and induced (iPSCs) pluripotent stem cells. Most highly expressed in undifferentiated embryonic stem cell and is rapidly down-regulated during differentiation.

It is found in the secreted. Its subcellular location is the extracellular space. Functionally, peptide hormone that functions as endogenous ligand for the G-protein-coupled apelin receptor (APLNR/APJ), that plays a role in the regulation of normal cardiovascular function and fluid homeostasis. Functions as a balanced agonist activating both G(i) protein pathway and beta-arrestin pathway of APLNR. Downstream G proteins activation, apelin can inhibit cAMP production and activate key intracellular effectors such as ERKs. On the other hand, APLNR activation induces beta-arrestin recruitment to the membrane leading to desensitization and internalization of the receptor. Required for mesendodermal differentiation, blood vessels formation and heart morphogenesis during early development and for adult cardiovascular homeostasis. Acts as a motogen by promoting mesendodermal cell migration during gastrulation by binding and activating APLNR. Acts as an early embryonic regulator of cellular movement with a role in migration and development of cardiac progenitor cells. May act as a chemoattractant for the activation of angioblast migration toward the embryonic midline, i.e. the position of the future vessel formation, during vasculogenesis. Positively regulates sinus venosus (SV)-derived endothelial cells migration into the developing heart to promote coronary blood vessel sprouting. Plays a role in placental vascular development; promotes placental trophoblast invasion and spiral artery remodeling in the uterus. Involved in the regulation of maternal cardiovascular homeostasis to prevent gestational hypertension and for potent cardioprotective functions during heart failure. Mediates myocardial contractility in an ERK1/2-dependent manner. The chain is Apelin receptor early endogenous ligand from Homo sapiens (Human).